Reading from the N-terminus, the 366-residue chain is NAD(P)H-quinone oxidoreductase subunit 1, chloroplastic (366 aa).

8 helical membrane passes run 29–49 (WITA…LVIV), 97–117 (LLFS…YLVI), 130–150 (IGVF…FMAG), 166–186 (VAQA…ISLL), 202–222 (FGFW…FLIA), 254–274 (FGLF…FVTV), 307–327 (VIIG…ISIV), and 340–360 (LLNL…LLTA).

It belongs to the complex I subunit 1 family. As to quaternary structure, NDH is composed of at least 16 different subunits, 5 of which are encoded in the nucleus.

It localises to the plastid. Its subcellular location is the chloroplast thylakoid membrane. The catalysed reaction is a plastoquinone + NADH + (n+1) H(+)(in) = a plastoquinol + NAD(+) + n H(+)(out). The enzyme catalyses a plastoquinone + NADPH + (n+1) H(+)(in) = a plastoquinol + NADP(+) + n H(+)(out). In terms of biological role, NDH shuttles electrons from NAD(P)H:plastoquinone, via FMN and iron-sulfur (Fe-S) centers, to quinones in the photosynthetic chain and possibly in a chloroplast respiratory chain. The immediate electron acceptor for the enzyme in this species is believed to be plastoquinone. Couples the redox reaction to proton translocation, and thus conserves the redox energy in a proton gradient. The protein is NAD(P)H-quinone oxidoreductase subunit 1, chloroplastic of Anthoceros angustus (Hornwort).